We begin with the raw amino-acid sequence, 87 residues long: Phosphoribosyl-ATP pyrophosphatase (87 aa).

The protein belongs to the PRA-PH family.

It is found in the cytoplasm. It carries out the reaction 1-(5-phospho-beta-D-ribosyl)-ATP + H2O = 1-(5-phospho-beta-D-ribosyl)-5'-AMP + diphosphate + H(+). It participates in amino-acid biosynthesis; L-histidine biosynthesis; L-histidine from 5-phospho-alpha-D-ribose 1-diphosphate: step 2/9. The polypeptide is Phosphoribosyl-ATP pyrophosphatase (Bifidobacterium animalis subsp. lactis (strain AD011)).